A 367-amino-acid polypeptide reads, in one-letter code: Protein U67 (367 aa).

The protein belongs to the herpesviridae UL95 family.

The chain is Protein U67 from Elephantid herpesvirus 1 (isolate Asian elephant/Berlin/Kiba/1998) (EIHV-1).